The sequence spans 496 residues: NADH-ubiquinone oxidoreductase 51 kDa subunit, mitochondrial (496 aa).

The transit peptide at 1 to 30 (MISRAAAPSSSIASLSSRSLRAQAPAARSF) directs the protein to the mitochondrion. 98–107 (GRGGAGFPSG) serves as a coordination point for NAD(+). 214–261 (GMGAYVCGEETSLIESIEGKAGKPRLKPPFPAAVGLFGCPSTVTNVET) is a binding site for FMN. Positions 393, 396, 399, and 439 each coordinate [4Fe-4S] cluster.

Belongs to the complex I 51 kDa subunit family. As to quaternary structure, complex I is composed of about 40 different subunits. This is a component of the flavoprotein-sulfur (FP) fragment of the enzyme. The cofactor is FMN. Requires [4Fe-4S] cluster as cofactor.

The protein resides in the mitochondrion inner membrane. It carries out the reaction a ubiquinone + NADH + 5 H(+)(in) = a ubiquinol + NAD(+) + 4 H(+)(out). Functionally, core subunit of the mitochondrial membrane respiratory chain NADH dehydrogenase (Complex I) that is believed to belong to the minimal assembly required for catalysis. Complex I functions in the transfer of electrons from NADH to the respiratory chain. The immediate electron acceptor for the enzyme is believed to be ubiquinone. The sequence is that of NADH-ubiquinone oxidoreductase 51 kDa subunit, mitochondrial (NUO51) from Aspergillus niger.